A 211-amino-acid polypeptide reads, in one-letter code: Pyridoxine/pyridoxamine 5'-phosphate oxidase (211 aa).

Substrate contacts are provided by residues 8–11 and K66; that span reads RNEY. Residues 61-66, 76-77, K83, and Q105 contribute to the FMN site; these read RVVLLK and FT. Residues Y123, R127, and S131 each contribute to the substrate site. FMN-binding positions include 140 to 141 and W184; that span reads QS. 190–192 contacts substrate; the sequence is RLH. R194 provides a ligand contact to FMN.

Belongs to the pyridoxamine 5'-phosphate oxidase family. In terms of assembly, homodimer. FMN is required as a cofactor.

The catalysed reaction is pyridoxamine 5'-phosphate + O2 + H2O = pyridoxal 5'-phosphate + H2O2 + NH4(+). The enzyme catalyses pyridoxine 5'-phosphate + O2 = pyridoxal 5'-phosphate + H2O2. It participates in cofactor metabolism; pyridoxal 5'-phosphate salvage; pyridoxal 5'-phosphate from pyridoxamine 5'-phosphate: step 1/1. The protein operates within cofactor metabolism; pyridoxal 5'-phosphate salvage; pyridoxal 5'-phosphate from pyridoxine 5'-phosphate: step 1/1. In terms of biological role, catalyzes the oxidation of either pyridoxine 5'-phosphate (PNP) or pyridoxamine 5'-phosphate (PMP) into pyridoxal 5'-phosphate (PLP). The polypeptide is Pyridoxine/pyridoxamine 5'-phosphate oxidase (Mannheimia succiniciproducens (strain KCTC 0769BP / MBEL55E)).